The following is a 212-amino-acid chain: LNYQLSPSFEYQSDPWFTHVWKGVNGTPTKKRAIGFKKLAKAVKFSTKLMGQAMAKRVKATILYATETGKSQVYAKTLCEIFKHAFDAKVMSMDEYDIVHLEHEALVLVVTSTFGNGDPPENGEKFGSALMEIRHPSSNSAERKSYKVRFNSVSSYSDSRKSSSDEPEHKDNFESTGPLANVRFSAFGLGSRAYPHFCAFARAVDTLLEELG.

Y11 is a heme b binding site. The segment at 30-50 (KKRAIGFKKLAKAVKFSTKLM) is calmodulin-binding. Residues 60 to 212 (ATILYATETG…AVDTLLEELG (153 aa)) enclose the Flavodoxin-like domain. Residues 155-175 (SYSDSRKSSSDEPEHKDNFES) are disordered. Residues 158-173 (DSRKSSSDEPEHKDNF) are compositionally biased toward basic and acidic residues. 186 to 212 (AFGLGSRAYPHFCAFARAVDTLLEELG) serves as a coordination point for FMN.

It belongs to the NOS family. It depends on heme b as a cofactor. FAD is required as a cofactor. The cofactor is FMN.

The catalysed reaction is 2 L-arginine + 3 NADPH + 4 O2 + H(+) = 2 L-citrulline + 2 nitric oxide + 3 NADP(+) + 4 H2O. In terms of biological role, produces nitric oxide (NO) which is a messenger molecule with diverse functions throughout the body. The chain is Nitric oxide synthase from Squalus acanthias (Spiny dogfish).